We begin with the raw amino-acid sequence, 176 residues long: Large ribosomal subunit protein uL6 (176 aa).

It belongs to the universal ribosomal protein uL6 family. As to quaternary structure, part of the 50S ribosomal subunit.

This protein binds to the 23S rRNA, and is important in its secondary structure. It is located near the subunit interface in the base of the L7/L12 stalk, and near the tRNA binding site of the peptidyltransferase center. This chain is Large ribosomal subunit protein uL6, found in Burkholderia lata (strain ATCC 17760 / DSM 23089 / LMG 22485 / NCIMB 9086 / R18194 / 383).